Reading from the N-terminus, the 449-residue chain is Tubulin beta chain (449 aa).

GTP contacts are provided by Gln-11, Glu-69, Ser-138, Gly-142, Thr-143, Gly-144, Asn-204, and Asn-226. Glu-69 provides a ligand contact to Mg(2+). The interval Gln-426–Ala-449 is disordered. Positions Thr-429–Ala-449 are enriched in acidic residues.

The protein belongs to the tubulin family. In terms of assembly, dimer of alpha and beta chains. A typical microtubule is a hollow water-filled tube with an outer diameter of 25 nm and an inner diameter of 15 nM. Alpha-beta heterodimers associate head-to-tail to form protofilaments running lengthwise along the microtubule wall with the beta-tubulin subunit facing the microtubule plus end conferring a structural polarity. Microtubules usually have 13 protofilaments but different protofilament numbers can be found in some organisms and specialized cells. It depends on Mg(2+) as a cofactor.

The protein resides in the cytoplasm. Its subcellular location is the cytoskeleton. Tubulin is the major constituent of microtubules, a cylinder consisting of laterally associated linear protofilaments composed of alpha- and beta-tubulin heterodimers. Microtubules grow by the addition of GTP-tubulin dimers to the microtubule end, where a stabilizing cap forms. Below the cap, tubulin dimers are in GDP-bound state, owing to GTPase activity of alpha-tubulin. The protein is Tubulin beta chain of Toxoplasma gondii.